The sequence spans 736 residues: Protein kinase C epsilon type (736 aa).

In terms of domain architecture, C2 spans 1-117 (MVVFNGLLKI…NGSRHFEDWI (117 aa)). Residue S62 is modified to Phosphoserine. Residues 169–220 (GHKFMATYLRQPTYCSHCRDFIWGVIGKQGYQCQVCTCVVHKRCHELIITKV) form a Phorbol-ester/DAG-type 1 zinc finger. A Phosphothreonine modification is found at T228. A Phosphoserine modification is found at S234. Residues 242 to 292 (PHKFGIHNYKVPTFCDHCGSLLWGLLRQGLQCKVCKMNVHRRCETNVAPNC) form a Phorbol-ester/DAG-type 2 zinc finger. At T309 the chain carries Phosphothreonine. The interval 310–356 (PDKITNSGQRRKKLIGGAESPQPTSGSSPSEEDRSKSAPTSPCDQEL) is disordered. Phosphoserine occurs at positions 316, 329, and 337. S346 carries the post-translational modification Phosphoserine; by GSK3-beta. Phosphothreonine is present on T349. At S350 the chain carries Phosphoserine; by MAPK11 and MAPK14. Residue S368 is modified to Phosphoserine; by autocatalysis. Residues 369–397 (FDNRGEEHRAASSTDGQLGSPENGEVRQG) form a disordered region. Position 388 is a phosphoserine (S388). The Protein kinase domain occupies 407–667 (FNFIKVLGKG…EDAIKQHPFF (261 aa)). ATP contacts are provided by residues 413 to 421 (LGKGSFGKV) and K436. D531 (proton acceptor) is an active-site residue. T565 carries the post-translational modification Phosphothreonine; by PDPK1. The AGC-kinase C-terminal domain maps to 668–736 (KEIDWVLLEQ…FSYFGEDLMP (69 aa)). Residue T702 is modified to Phosphothreonine. Residue T709 is modified to Phosphothreonine; by autocatalysis. Position 728 is a phosphoserine; by autocatalysis (S728).

Belongs to the protein kinase superfamily. AGC Ser/Thr protein kinase family. PKC subfamily. Forms a ternary complex with TRIM63 and RACK1/GN2BL1. Can form a complex with PDLIM5 and N-type calcium channel. Interacts with COPB1. Interacts with DGKQ. Interacts with STAT3. Interacts with YWHAB. Interacts with HSP90AB1; promotes functional activation in a heat shock-dependent manner. Interacts (via phorbol-ester/DAG-type 2 domain) with PRPH and VIM. Interacts with NLRP5/MATER. Post-translationally, phosphorylation on Thr-565 by PDPK1 triggers autophosphorylation on Ser-728. Phosphorylation in the hinge domain at Ser-350 by MAPK11 or MAPK14, Ser-346 by GSK3B and Ser-368 by autophosphorylation is required for interaction with YWHAB. In response to growth factors, phosphorylated at Thr-702 and Ser-728 by the mTORC2 complex, promoting autophosphorylation and activation of PRKCE.

Its subcellular location is the cytoplasm. The protein resides in the cytoskeleton. It is found in the cell membrane. The protein localises to the perinuclear region. It localises to the nucleus. It catalyses the reaction L-seryl-[protein] + ATP = O-phospho-L-seryl-[protein] + ADP + H(+). The enzyme catalyses L-threonyl-[protein] + ATP = O-phospho-L-threonyl-[protein] + ADP + H(+). With respect to regulation, novel PKCs (PRKCD, PRKCE, PRKCH and PRKCQ) are calcium-insensitive, but activated by diacylglycerol (DAG) and phosphatidylserine. Three specific sites; Thr-565 (activation loop of the kinase domain), Thr-709 (turn motif) and Ser-728 (hydrophobic region), need to be phosphorylated for its full activation. Calcium-independent, phospholipid- and diacylglycerol (DAG)-dependent serine/threonine-protein kinase that plays essential roles in the regulation of multiple cellular processes linked to cytoskeletal proteins, such as cell adhesion, motility, migration and cell cycle, functions in neuron growth and ion channel regulation, and is involved in immune response, cancer cell invasion and regulation of apoptosis. Mediates cell adhesion to the extracellular matrix via integrin-dependent signaling, by mediating angiotensin-2-induced activation of integrin beta-1 (ITGB1) in cardiac fibroblasts. Phosphorylates MARCKS, which phosphorylates and activates PTK2/FAK, leading to the spread of cardiomyocytes. Involved in the control of the directional transport of ITGB1 in mesenchymal cells by phosphorylating vimentin (VIM), an intermediate filament (IF) protein. In epithelial cells, associates with and phosphorylates keratin-8 (KRT8), which induces targeting of desmoplakin at desmosomes and regulates cell-cell contact. Phosphorylates IQGAP1, which binds to CDC42, mediating epithelial cell-cell detachment prior to migration. During cytokinesis, forms a complex with YWHAB, which is crucial for daughter cell separation, and facilitates abscission by a mechanism which may implicate the regulation of RHOA. In cardiac myocytes, regulates myofilament function and excitation coupling at the Z-lines, where it is indirectly associated with F-actin via interaction with COPB1. During endothelin-induced cardiomyocyte hypertrophy, mediates activation of PTK2/FAK, which is critical for cardiomyocyte survival and regulation of sarcomere length. Plays a role in the pathogenesis of dilated cardiomyopathy via persistent phosphorylation of troponin I (TNNI3). Involved in nerve growth factor (NFG)-induced neurite outgrowth and neuron morphological change independently of its kinase activity, by inhibition of RHOA pathway, activation of CDC42 and cytoskeletal rearrangement. May be involved in presynaptic facilitation by mediating phorbol ester-induced synaptic potentiation. Phosphorylates gamma-aminobutyric acid receptor subunit gamma-2 (GABRG2), which reduces the response of GABA receptors to ethanol and benzodiazepines and may mediate acute tolerance to the intoxicating effects of ethanol. Upon PMA treatment, phosphorylates the capsaicin- and heat-activated cation channel TRPV1, which is required for bradykinin-induced sensitization of the heat response in nociceptive neurons. Is able to form a complex with PDLIM5 and N-type calcium channel, and may enhance channel activities and potentiates fast synaptic transmission by phosphorylating the pore-forming alpha subunit CACNA1B (CaV2.2). Downstream of TLR4, plays an important role in the lipopolysaccharide (LPS)-induced immune response by phosphorylating and activating TICAM2/TRAM, which in turn activates the transcription factor IRF3 and subsequent cytokines production. In differentiating erythroid progenitors, is regulated by EPO and controls the protection against the TNFSF10/TRAIL-mediated apoptosis, via BCL2. May be involved in the regulation of the insulin-induced phosphorylation and activation of AKT1. Phosphorylates NLRP5/MATER and may thereby modulate AKT pathway activation in cumulus cells. Phosphorylates and activates LRRK1, which phosphorylates RAB proteins involved in intracellular trafficking. This is Protein kinase C epsilon type (PRKCE) from Oryctolagus cuniculus (Rabbit).